The sequence spans 746 residues: Rhizobactin receptor (746 aa).

The signal sequence occupies residues Met1–Ala26. The TonB box signature appears at Glu40–Gly47. Positions Gln52–Lys163 constitute a TBDR plug domain. A TBDR beta-barrel domain is found at Glu169 to Phe746. Residues Phe729 to Phe746 carry the TonB C-terminal box motif.

The protein belongs to the TonB-dependent receptor family.

It is found in the cell outer membrane. In terms of biological role, receptor for the siderophore rhizobactin. This chain is Rhizobactin receptor (rhtA), found in Rhizobium meliloti (strain 1021) (Ensifer meliloti).